Reading from the N-terminus, the 358-residue chain is Malate dehydrogenase 2, glyoxysomal (358 aa).

The transit peptide at 1 to 38 (MEFRGDANKRIAMISAHLQPSFTPQMEAKNSVMGRENC) directs the protein to the glyoxysome. NAD(+) contacts are provided by residues 53 to 59 (GAAGGIG) and Asp-79. The substrate site is built by Arg-126 and Arg-132. NAD(+)-binding positions include Asn-139 and 162 to 164 (ISN). Residues Asn-164 and Arg-198 each contribute to the substrate site. Residue His-222 is the Proton acceptor of the active site. Residue Met-273 participates in NAD(+) binding.

Belongs to the LDH/MDH superfamily. MDH type 1 family. As to quaternary structure, homodimer.

The protein localises to the glyoxysome. It carries out the reaction (S)-malate + NAD(+) = oxaloacetate + NADH + H(+). This Brassica napus (Rape) protein is Malate dehydrogenase 2, glyoxysomal (MDH2).